Consider the following 236-residue polypeptide: Small ribosomal subunit protein uS3c (236 aa).

The 81-residue stretch at 47–127 (VRKYVRSSSR…KLNMTLSQVA (81 aa)) folds into the KH type-2 domain.

It belongs to the universal ribosomal protein uS3 family. In terms of assembly, part of the 30S ribosomal subunit.

The protein localises to the plastid. Its subcellular location is the chloroplast. The polypeptide is Small ribosomal subunit protein uS3c (rps3) (Zygnema circumcarinatum (Green alga)).